A 676-amino-acid polypeptide reads, in one-letter code: Lon-like protease BrxL (676 aa).

The protein belongs to the BrxL family.

BREX systems (bacteriophage exclusion) provide immunity against bacteriophage. Part of a type 1 BREX system. This system allows phage adsorption but prevents phage DNA replication, without degradation of the phage DNA. Methylation of bacterial DNA by PglX probably guides self/non-self discrimination. When the brxA-brxB-brxC-pglX and pglZ-brxL operons are transformed into a susceptible B.subtilis strain (BEST7003) they confer resistance to bacteriophages SPbeta, SP16, Zeta, phi3T and SP02 and partial protection to phages SP01 and SP82G (these include lytic and temperate phage). They do not protect against phages phi105, rho10 or rho14. Additionally confers a very slight reduction in efficiency of plasmid transformation. This is Lon-like protease BrxL from Bacillus cereus (strain H3081.97).